Here is a 152-residue protein sequence, read N- to C-terminus: uncharacterized protein (152 aa).

An N-terminal signal peptide occupies residues Met-1 to Ala-16. Residues Asn-20–Tyr-135 form the Cytochrome c domain. Heme c contacts are provided by Cys-33, Cys-36, and His-37.

This is an uncharacterized protein from Aquifex aeolicus (strain VF5).